A 569-amino-acid chain; its full sequence is Urease subunit alpha (569 aa).

One can recognise a Urease domain in the interval Gly131–Leu569. Ni(2+)-binding residues include His136, His138, and Lys219. Lys219 is subject to N6-carboxylysine. A substrate-binding site is contributed by His221. Residues His248 and His274 each contribute to the Ni(2+) site. His322 serves as the catalytic Proton donor. Asp362 is a binding site for Ni(2+).

The protein belongs to the metallo-dependent hydrolases superfamily. Urease alpha subunit family. Heterotrimer of UreA (gamma), UreB (beta) and UreC (alpha) subunits. Three heterotrimers associate to form the active enzyme. Requires Ni cation as cofactor. Post-translationally, carboxylation allows a single lysine to coordinate two nickel ions.

The protein resides in the cytoplasm. The catalysed reaction is urea + 2 H2O + H(+) = hydrogencarbonate + 2 NH4(+). Its pathway is nitrogen metabolism; urea degradation; CO(2) and NH(3) from urea (urease route): step 1/1. The sequence is that of Urease subunit alpha from Synechococcus sp. (strain CC9311).